Reading from the N-terminus, the 192-residue chain is Fe/S biogenesis protein NfuA (192 aa).

The [4Fe-4S] cluster site is built by Cys-149 and Cys-152.

The protein belongs to the NfuA family. In terms of assembly, homodimer. It depends on [4Fe-4S] cluster as a cofactor.

Its function is as follows. Involved in iron-sulfur cluster biogenesis. Binds a 4Fe-4S cluster, can transfer this cluster to apoproteins, and thereby intervenes in the maturation of Fe/S proteins. Could also act as a scaffold/chaperone for damaged Fe/S proteins. This chain is Fe/S biogenesis protein NfuA, found in Shewanella putrefaciens (strain CN-32 / ATCC BAA-453).